The chain runs to 236 residues: MKIGIIGAMEPEVAHLIAAMTNATSQTIAGIEFIAGTLAGKDVVVTRSGIGKVAASIATTLLIEKYAPDAVINTGSAGGFVDTLAIGDIVISSEVRHHDVDVTAFGYEIGQMAQQPAAFIPAAHLVEAANKAIAQLGEVKAIEGLICTGDSFICDPVRTQAMLKNFPTMAACEMEGAAIAQVCHQFGVPFVVIRSLSDNANNDSPVDFDSYIVKAGYHSALMVMLLLEQLNPSAVK.

Glutamate 12 acts as the Proton acceptor in catalysis. Substrate is bound by residues glycine 78, isoleucine 153, and 174 to 175 (ME). Aspartate 198 serves as the catalytic Proton donor.

This sequence belongs to the PNP/UDP phosphorylase family. MtnN subfamily.

The enzyme catalyses S-adenosyl-L-homocysteine + H2O = S-(5-deoxy-D-ribos-5-yl)-L-homocysteine + adenine. It catalyses the reaction S-methyl-5'-thioadenosine + H2O = 5-(methylsulfanyl)-D-ribose + adenine. The catalysed reaction is 5'-deoxyadenosine + H2O = 5-deoxy-D-ribose + adenine. It participates in amino-acid biosynthesis; L-methionine biosynthesis via salvage pathway; S-methyl-5-thio-alpha-D-ribose 1-phosphate from S-methyl-5'-thioadenosine (hydrolase route): step 1/2. In terms of biological role, catalyzes the irreversible cleavage of the glycosidic bond in both 5'-methylthioadenosine (MTA) and S-adenosylhomocysteine (SAH/AdoHcy) to adenine and the corresponding thioribose, 5'-methylthioribose and S-ribosylhomocysteine, respectively. Also cleaves 5'-deoxyadenosine, a toxic by-product of radical S-adenosylmethionine (SAM) enzymes, into 5-deoxyribose and adenine. The protein is 5'-methylthioadenosine/S-adenosylhomocysteine nucleosidase of Shewanella baltica (strain OS223).